We begin with the raw amino-acid sequence, 179 residues long: MITLDVIKSDGSSKTCTHLKKIIKDHSGKVLIALKLILALLTFFTITITINYIKVENNLQICQSKTESDKEDSPSNTTSVTTKTTLDHDITQYFKRLIQRYTDSVINKDTCWKISRNQCTNITTYKFLCFKPEDSKINSCDRLTDLCRNKSKSAAEAYHTVECHCIYTIEWKCYHHSID.

Topologically, residues methionine 1–lysine 29 are intravirion. A helical; Signal-anchor for type II membrane protein transmembrane segment spans residues valine 30–isoleucine 50. Residues asparagine 51–aspartate 179 are Virion surface-facing. Asparagine 76, asparagine 121, and asparagine 149 each carry an N-linked (GlcNAc...) asparagine; by host glycan.

It belongs to the metapneumovirus small hydrophobic protein family. As to quaternary structure, homooligomer. Interacts with glycoprotein G.

It localises to the virion membrane. It is found in the host cell membrane. Viroporin that forms a ion channel probably displaying low ion selectivity. Plays a role in counteracting host innate immunity by inhibiting TLR7/MyD88/TRAF6 signaling and STAT1 phosphorylation, leading to down-regulation of type-I IFN. The polypeptide is Small hydrophobic protein (SH) (Homo sapiens (Human)).